A 323-amino-acid polypeptide reads, in one-letter code: Tetraacyldisaccharide 4'-kinase (323 aa).

Position 56–63 (56–63 (TVGGVGKT)) interacts with ATP.

The protein belongs to the LpxK family.

It carries out the reaction a lipid A disaccharide + ATP = a lipid IVA + ADP + H(+). It participates in glycolipid biosynthesis; lipid IV(A) biosynthesis; lipid IV(A) from (3R)-3-hydroxytetradecanoyl-[acyl-carrier-protein] and UDP-N-acetyl-alpha-D-glucosamine: step 6/6. In terms of biological role, transfers the gamma-phosphate of ATP to the 4'-position of a tetraacyldisaccharide 1-phosphate intermediate (termed DS-1-P) to form tetraacyldisaccharide 1,4'-bis-phosphate (lipid IVA). The protein is Tetraacyldisaccharide 4'-kinase of Legionella pneumophila (strain Corby).